The chain runs to 296 residues: Putative S-adenosyl-L-methionine-dependent methyltransferase MAP_3881 (296 aa).

Residues D121 and 150 to 151 (DL) contribute to the S-adenosyl-L-methionine site.

The protein belongs to the UPF0677 family.

Functionally, exhibits S-adenosyl-L-methionine-dependent methyltransferase activity. This Mycolicibacterium paratuberculosis (strain ATCC BAA-968 / K-10) (Mycobacterium paratuberculosis) protein is Putative S-adenosyl-L-methionine-dependent methyltransferase MAP_3881.